Here is a 939-residue protein sequence, read N- to C-terminus: Tyrosine-protein kinase Shark (939 aa).

The SH2 1 domain maps to 10–106 (WYHGNLSREA…GLPTKLTVPL (97 aa)). 3 ANK repeats span residues 153 to 185 (DGQT…SSDS), 186 to 218 (FGCQ…GRNI), and 220 to 252 (NGYV…PRTS). Residues 288–403 (WYHGTLTREE…GLPVSLKYPV (116 aa)) enclose the SH2 2 domain. Disordered stretches follow at residues 410 to 446 (EVPS…QHPH) and 476 to 505 (ALFD…SLAG). Residues 496–505 (ESSVSGSLAG) are compositionally biased toward polar residues. Positions 662 to 921 (LVLDREIGHG…PTFVYLTEFF (260 aa)) constitute a Protein kinase domain. ATP is bound by residues 668 to 676 (IGHGEFGSV) and Lys698. The active-site Proton acceptor is the Asp789. Phosphotyrosine is present on Tyr927.

This sequence belongs to the protein kinase superfamily. Tyr protein kinase family. In terms of assembly, interacts with drpr; this is required for the recruitment of drpr and glial cells to severed axons and for the phagocytosis of axonal debris by glial cells following axon injury. As to expression, gastrulation embryos show expression in ectodermal cells along the cephalic furrow and ventral midline. Proctodeum, stomodeum and their derived structures (foregut, atrium, pharynx, esophagus and hindgut) continue to show expression from stage 8-9 to late embryos. Other ectodermally derived structures (frontal sac, salivary gland and labium) and developing tracheal system also show expression.

Its subcellular location is the cytoplasm. The catalysed reaction is L-tyrosyl-[protein] + ATP = O-phospho-L-tyrosyl-[protein] + ADP + H(+). Following axon injury, required for recruitment of drpr and glial cells to severed axons and for glial clearance of severed axons from the central nervous system. Together with Src42a and drpr, promotes the migration of macrophages to sites of wounding as part of a signaling cascade where Scr42a detects production of hydrogen peroxide at wound sites which triggers phosphorylation of drpr and subsequent recruitment and activation of shark. May be involved in signal transduction on the apical surface of ectodermal epithelial cells, regulating their polarity during invagination. Crumbs (crb) may be the intracellular signal. This chain is Tyrosine-protein kinase Shark, found in Drosophila melanogaster (Fruit fly).